A 429-amino-acid polypeptide reads, in one-letter code: MYRFAPSPTGDMHIGNLRAAIFNYICSLQDNSGFILRIEDTDNARNIDGKDKEIFDILTKFNIKWDTLYYQSKNLKFHQEFAAKLLAEKKAFLCFCDETTLESKKEAAKTAGKPYRYDGTCENLSDDDVLSNPRPAAVRLKIKNEPQSFYDAIKGEVKFEPQNIDSFVLLRADKTPTYNFACAIDDMLEGVTFVIRGEDHVSNTPKQNLIREALGYTGKIGYAHLPIILNKEGKKMSKRENSSSVKWLLNRGYMPEAIANYLILLGNKTPCEIFTLEESLQWFSIKNISKSPAKFDEEKLAQINREHIKKASDERLKELGLSKPHLARFYTQECSLISEIKDKIDQIYSKKDISDEWKQNANLIKDAVLNSNIPNNFDELKNEIIQITNLKGKSLFMPFRLLLTGSEHGPELKELYALIKDDIKEIIAK.

The 'HIGH' region signature appears at 6–16 (PSPTGDMHIGN). Positions 235 to 239 (KMSKR) match the 'KMSKS' region motif. Lysine 238 is an ATP binding site.

Belongs to the class-I aminoacyl-tRNA synthetase family. Glutamate--tRNA ligase type 1 subfamily. In terms of assembly, monomer.

It localises to the cytoplasm. The catalysed reaction is tRNA(Glu) + L-glutamate + ATP = L-glutamyl-tRNA(Glu) + AMP + diphosphate. Functionally, catalyzes the attachment of glutamate to tRNA(Glu) in a two-step reaction: glutamate is first activated by ATP to form Glu-AMP and then transferred to the acceptor end of tRNA(Glu). The sequence is that of Glutamate--tRNA ligase 1 from Campylobacter fetus subsp. fetus (strain 82-40).